The chain runs to 67 residues: MKLTCVLIAAVLLLAVCQLDSADATGYMRKNPSLRSPKRTRGCKSKGSFCWNGIECCGGNCFFACIY.

The signal sequence occupies residues 1–24 (MKLTCVLIAAVLLLAVCQLDSADA). The propeptide occupies 25–37 (TGYMRKNPSLRSP). Cystine bridges form between cysteine 43–cysteine 57, cysteine 50–cysteine 61, and cysteine 56–cysteine 65.

Belongs to the conotoxin O1 superfamily. Expressed by the venom duct.

The protein localises to the secreted. In Californiconus californicus (California cone), this protein is Conotoxin Cl6.6a.